Here is a 55-residue protein sequence, read N- to C-terminus: ATP synthase protein 8 (55 aa).

A helical transmembrane segment spans residues 7 to 24; it reads NPWFFIMIISWLTYSMII. A disordered region spans residues 34–55; the sequence is TNPPARKEPTTNTTTPWNWPWT. Residues 43 to 55 show a composition bias toward low complexity; it reads TTNTTTPWNWPWT.

The protein belongs to the ATPase protein 8 family. In terms of assembly, F-type ATPases have 2 components, CF(1) - the catalytic core - and CF(0) - the membrane proton channel.

It is found in the mitochondrion membrane. Mitochondrial membrane ATP synthase (F(1)F(0) ATP synthase or Complex V) produces ATP from ADP in the presence of a proton gradient across the membrane which is generated by electron transport complexes of the respiratory chain. F-type ATPases consist of two structural domains, F(1) - containing the extramembraneous catalytic core and F(0) - containing the membrane proton channel, linked together by a central stalk and a peripheral stalk. During catalysis, ATP synthesis in the catalytic domain of F(1) is coupled via a rotary mechanism of the central stalk subunits to proton translocation. Part of the complex F(0) domain. Minor subunit located with subunit a in the membrane. The chain is ATP synthase protein 8 (MT-ATP8) from Vireo altiloquus (Black-whiskered vireo).